The primary structure comprises 378 residues: uncharacterized protein (378 aa).

Transmembrane regions (helical) follow at residues Val-7–Gln-29, Leu-33–Ile-55, Val-68–Thr-85, Ser-90–Leu-108, Pro-115–Leu-137, Leu-152–Met-174, Asn-204–Leu-225, Ile-245–Ala-267, Leu-280–Val-302, and Phe-347–Leu-366.

The protein localises to the cell membrane. This is an uncharacterized protein from Aquifex aeolicus (strain VF5).